The sequence spans 65 residues: MNIFVDQDNYKEVSLKLTKKLLTSEHYQFLLCFKGEKLDITISVTPQSLVKLRDDINELIFMFSD.

This is SPbeta prophage-derived uncharacterized protein YopU (yopU) from Bacillus subtilis (strain 168).